A 208-amino-acid chain; its full sequence is Uracil phosphoribosyltransferase (208 aa).

5-phospho-alpha-D-ribose 1-diphosphate contacts are provided by residues Arg-78, Arg-103, and 130–138; that span reads DPMLATANS. Uracil-binding positions include Ile-193 and 198–200; that span reads GDA. Position 199 (Asp-199) interacts with 5-phospho-alpha-D-ribose 1-diphosphate.

This sequence belongs to the UPRTase family. It depends on Mg(2+) as a cofactor.

The catalysed reaction is UMP + diphosphate = 5-phospho-alpha-D-ribose 1-diphosphate + uracil. Its pathway is pyrimidine metabolism; UMP biosynthesis via salvage pathway; UMP from uracil: step 1/1. Its activity is regulated as follows. Allosterically activated by GTP. In terms of biological role, catalyzes the conversion of uracil and 5-phospho-alpha-D-ribose 1-diphosphate (PRPP) to UMP and diphosphate. In Brucella ovis (strain ATCC 25840 / 63/290 / NCTC 10512), this protein is Uracil phosphoribosyltransferase.